We begin with the raw amino-acid sequence, 62 residues long: E3 SUMO-protein ligase EGR2 (62 aa).

3 C2H2-type zinc fingers span residues 1 to 21, 27 to 49, and 55 to 62; these read AEGC…IRIH, FQCA…IRTH, and FACDYCGR.

It belongs to the EGR C2H2-type zinc-finger protein family. Interacts with HCFC1. Interacts with WWP2. Interacts with UBC9. Interacts with CITED1. Interacts (via phosphorylated form) with SFN. Post-translationally, ubiquitinated by WWP2 leading to proteasomal degradation. Acetylated. May be deacetylated by HDAC6, HDAC10 or SIRT1.

The protein localises to the nucleus. It functions in the pathway protein modification; protein sumoylation. Sequence-specific DNA-binding transcription factor. Plays a role in hindbrain segmentation by regulating the expression of a subset of homeobox containing genes and in Schwann cell myelination by regulating the expression of genes involved in the formation and maintenance of myelin. Binds to two EGR2-consensus sites EGR2A (5'-CTGTAGGAG-3') and EGR2B (5'-ATGTAGGTG-3') in the HOXB3 enhancer and promotes HOXB3 transcriptional activation. Binds to specific DNA sites located in the promoter region of HOXA4, HOXB2 and ERBB2. Regulates hindbrain segmentation by controlling the expression of Hox genes, such as HOXA4, HOXB3 and HOXB2, and thereby specifying odd and even rhombomeres. Promotes the expression of HOXB3 in the rhombomere r5 in the hindbrain. Regulates myelination in the peripheral nervous system after birth, possibly by regulating the expression of myelin proteins, such as MPZ, and by promoting the differentiation of Schwann cells. Involved in the development of the jaw openener musculature, probably by playing a role in its innervation through trigeminal motor neurons. May play a role in adipogenesis, possibly by regulating the expression of CEBPB. Its function is as follows. E3 SUMO-protein ligase helping SUMO1 conjugation to its coregulators NAB1 and NAB2, whose sumoylation down-regulates EGR2 transcriptional activity. The sequence is that of E3 SUMO-protein ligase EGR2 (EGR2) from Cerdocyon thous (Crab-eating fox).